The following is a 993-amino-acid chain: Glycine dehydrogenase (decarboxylating) (993 aa).

Position 715 is an N6-(pyridoxal phosphate)lysine (K715).

This sequence belongs to the GcvP family. As to quaternary structure, the glycine cleavage system is composed of four proteins: P, T, L and H. The cofactor is pyridoxal 5'-phosphate.

It catalyses the reaction N(6)-[(R)-lipoyl]-L-lysyl-[glycine-cleavage complex H protein] + glycine + H(+) = N(6)-[(R)-S(8)-aminomethyldihydrolipoyl]-L-lysyl-[glycine-cleavage complex H protein] + CO2. In terms of biological role, the glycine cleavage system catalyzes the degradation of glycine. The P protein binds the alpha-amino group of glycine through its pyridoxal phosphate cofactor; CO(2) is released and the remaining methylamine moiety is then transferred to the lipoamide cofactor of the H protein. This is Glycine dehydrogenase (decarboxylating) from Xylella fastidiosa (strain Temecula1 / ATCC 700964).